Consider the following 407-residue polypeptide: S-adenosylmethionine synthase (407 aa).

Histidine 15 contributes to the ATP binding site. Aspartate 17 contributes to the Mg(2+) binding site. Position 43 (glutamate 43) interacts with K(+). L-methionine-binding residues include glutamate 56 and glutamine 100. The flexible loop stretch occupies residues 100 to 110 (QSPDIAQGVDE). ATP-binding positions include 171–173 (DGK), 248–249 (KF), aspartate 257, 263–264 (RK), alanine 280, and lysine 284. Residue aspartate 257 coordinates L-methionine. Lysine 288 lines the L-methionine pocket.

The protein belongs to the AdoMet synthase family. In terms of assembly, homotetramer; dimer of dimers. The cofactor is Mg(2+). K(+) serves as cofactor.

It is found in the cytoplasm. It carries out the reaction L-methionine + ATP + H2O = S-adenosyl-L-methionine + phosphate + diphosphate. It functions in the pathway amino-acid biosynthesis; S-adenosyl-L-methionine biosynthesis; S-adenosyl-L-methionine from L-methionine: step 1/1. In terms of biological role, catalyzes the formation of S-adenosylmethionine (AdoMet) from methionine and ATP. The overall synthetic reaction is composed of two sequential steps, AdoMet formation and the subsequent tripolyphosphate hydrolysis which occurs prior to release of AdoMet from the enzyme. In Synechococcus sp. (strain RCC307), this protein is S-adenosylmethionine synthase.